A 210-amino-acid chain; its full sequence is Cell division protein SepF (210 aa).

It belongs to the SepF family. As to quaternary structure, homodimer. Interacts with FtsZ.

It is found in the cytoplasm. Its function is as follows. Cell division protein that is part of the divisome complex and is recruited early to the Z-ring. Probably stimulates Z-ring formation, perhaps through the cross-linking of FtsZ protofilaments. Its function overlaps with FtsA. This is Cell division protein SepF from Mycobacterium leprae (strain Br4923).